Consider the following 1269-residue polypeptide: DNA-directed RNA polymerase subunit beta (1269 aa).

This sequence belongs to the RNA polymerase beta chain family. The RNAP catalytic core consists of 2 alpha, 1 beta, 1 beta' and 1 omega subunit. When a sigma factor is associated with the core the holoenzyme is formed, which can initiate transcription.

It carries out the reaction RNA(n) + a ribonucleoside 5'-triphosphate = RNA(n+1) + diphosphate. Its function is as follows. DNA-dependent RNA polymerase catalyzes the transcription of DNA into RNA using the four ribonucleoside triphosphates as substrates. The protein is DNA-directed RNA polymerase subunit beta of Porphyromonas gingivalis (strain ATCC BAA-308 / W83).